A 158-amino-acid polypeptide reads, in one-letter code: MRFNEKELVFLSRQPTQRAAELGMRGPKKGDVVKKRFVKLIVNFLFYFRTDEDEPIGALLLEQCRVEREDLQVFSIVFLDEAERKYLFECDSQEQCAEWIDAIIKASYEFMRKNLVYYRTEIHRLTGKDPLEQYGISDETRFQVNSALPPLPPPPPPT.

The PH domain maps to proline 15–tyrosine 108.

The sequence is that of Pleckstrin homology domain-containing family J member 1 (plekhj1) from Danio rerio (Zebrafish).